We begin with the raw amino-acid sequence, 356 residues long: Glutamine synthetase PR-2 (356 aa).

Residues 19–99 enclose the GS beta-grasp domain; that stretch reads IIAEYIWVGG…VICDVYTPAG (81 aa). The segment at 37-66 is disordered; sequence ARTLPGPVDDPAKLPKWNYDGSSTDQAPGD. One can recognise a GS catalytic domain in the interval 106–356; it reads KRYDAAKIFS…IAETTILWKP (251 aa).

The protein belongs to the glutamine synthetase family. As to quaternary structure, homooctamer. As to expression, roots.

The protein localises to the cytoplasm. It catalyses the reaction L-glutamate + NH4(+) + ATP = L-glutamine + ADP + phosphate + H(+). The protein is Glutamine synthetase PR-2 of Phaseolus vulgaris (Kidney bean).